Consider the following 147-residue polypeptide: Hemoglobin subunit epsilon (147 aa).

A Globin domain is found at 3-147 (HFTAEEKTAI…VASALAHKYH (145 aa)). Phosphoserine is present on residues S14 and S51. The heme b site is built by H64 and H93.

Belongs to the globin family. As to expression, red blood cells.

Hemoglobin epsilon chain is an embryonic-type beta-type chain found in prenatal and neonatal marsupials. This Notamacropus eugenii (Tammar wallaby) protein is Hemoglobin subunit epsilon (HBE1).